The following is a 198-amino-acid chain: Large ribosomal subunit protein bL9 (198 aa).

Belongs to the bacterial ribosomal protein bL9 family.

Its function is as follows. Binds to the 23S rRNA. The chain is Large ribosomal subunit protein bL9 from Bartonella tribocorum (strain CIP 105476 / IBS 506).